A 269-amino-acid polypeptide reads, in one-letter code: Aminoglycoside (3'') (9) adenylyltransferase (269 aa).

The enzyme catalyses streptomycin + ATP = 3''-O-adenylylstreptomycin + diphosphate. It carries out the reaction spectinomycin + ATP = 9-O-adenylylspectinomycin + diphosphate. Mediates bacterial resistance to the antibiotic spectinomycin and probably also to streptomycin. This is Aminoglycoside (3'') (9) adenylyltransferase from Rhizobium radiobacter (Agrobacterium tumefaciens).